We begin with the raw amino-acid sequence, 239 residues long: Regulator protein TubY (239 aa).

Residues 138–239 are required to bind TubZ; the sequence is INNTISQQLS…KGFFGKLFKR (102 aa). A coiled-coil region spans residues 150 to 229; that stretch reads LNAHNEALEQ…KQQNEEQNNK (80 aa). The span at 217-228 shows a compositional bias: basic and acidic residues; sequence EERKQQNEEQNN. The interval 217–239 is disordered; sequence EERKQQNEEQNNKKGFFGKLFKR. Residues 229–239 show a composition bias toward low complexity; sequence KKGFFGKLFKR.

As to quaternary structure, forms homooctamers in the absence of the last 13 residues; the coiled coil domain is required for oligomerization. In the presence of GTP and Mg(2+) binds to TubZ and also to TubZ-TubR-tubC DNA; the latter is reshaped from large filament bundles to rings of 30-40 nm diameter.

The protein localises to the host cytoplasm. Its function is as follows. A probable TubZ filament regulator that is part of the type III partition system presumably used to ensure correct segregation of this bacteriophage. Binds to TubZ in the presence of GTP and Mg(2+), and to TubZ-TubR-tubC (tubC is the centromere-like site). The latter complex is reshaped from large bundles to rings by TubY. Modifies TubZ filaments formed in the presence of GDP to make them thinner and more flexible; in GDP and lacking the last 8 residues of TubZ makes rings without TubT-tubC. The protein is Regulator protein TubY of Clostridium botulinum C (Clostridium botulinum C bacteriophage).